Reading from the N-terminus, the 118-residue chain is MKSLLFTLAVFMLLAQLVSGSWYVKKCLNDVGICKKKCKPEELHVKNGWAMCGKQRDCCVPADKRANYPAFCVQTKTTRTSTVTATTATRATTATTTTLMMTTASMSSMTPTPVSPTG.

The N-terminal stretch at methionine 1 to glycine 20 is a signal peptide. An in vitro binds to LPS, mediates antimicrobial activity and inhibits LPS-mediated inflammation region spans residues serine 21–aspartate 63. 3 disulfides stabilise this stretch: cysteine 27/cysteine 58, cysteine 34/cysteine 52, and cysteine 38/cysteine 59.

Belongs to the beta-defensin family. Homodimer or homooligomer; disulfide-linked. Post-translationally, O-glycosylated; glycans contain alpha(2,3)-linked sialic acids.

It is found in the secreted. Functionally, highly glycosylated atypical beta-defensin involved in several aspects of sperm function. Facilitates sperm transport in the female reproductive tract and contributes to sperm protection against immunodetection; both functions are probably implicating the negative surface charge provided by its O-linked oligosaccharides in the sperm glycocalyx. Involved in binding of sperm to oviductal epithelial cells to form a sperm reservoir until ovulation. Release from the sperm surface during capacitation and ovaluation by an elevation of oviductal fluid pH is unmasking other surface components and allows sperm to penetrate the cumulus matrix and bind to the zona pellucida of the oocyte. In vitro has antimicrobial activity and may inhibit LPS-mediated inflammation. The sequence is that of Beta-defensin 126 (DEFB126) from Pongo pygmaeus (Bornean orangutan).